Consider the following 400-residue polypeptide: Subtilisin-like protease 11 (400 aa).

A signal peptide spans 1-19; that stretch reads MGLFTVVFTAIAALSAVDA. Residues 20-117 constitute a propeptide that is removed on maturation; the sequence is AELLRSPNSK…VEHDRYVYID (98 aa). One can recognise an Inhibitor I9 domain in the interval 35-116; it reads SYLVVMKDSV…FVEHDRYVYI (82 aa). The Peptidase S8 domain occupies 127–400; the sequence is SWGLGRVSHR…NKLLYNGSGQ (274 aa). N-linked (GlcNAc...) asparagine glycosylation is present at Asn-138. Active-site charge relay system residues include Asp-159 and His-191. Asn-252, Asn-336, and Asn-337 each carry an N-linked (GlcNAc...) asparagine glycan. Catalysis depends on Ser-346, which acts as the Charge relay system. N-linked (GlcNAc...) asparagine glycosylation is found at Asn-388 and Asn-396.

Belongs to the peptidase S8 family.

The protein resides in the secreted. Functionally, secreted subtilisin-like serine protease with keratinolytic activity that contributes to pathogenicity. This is Subtilisin-like protease 11 (SUB11) from Arthroderma gypseum (strain ATCC MYA-4604 / CBS 118893) (Microsporum gypseum).